We begin with the raw amino-acid sequence, 90 residues long: Probable Fe(2+)-trafficking protein (90 aa).

This sequence belongs to the Fe(2+)-trafficking protein family. As to quaternary structure, monomer.

In terms of biological role, could be a mediator in iron transactions between iron acquisition and iron-requiring processes, such as synthesis and/or repair of Fe-S clusters in biosynthetic enzymes. The polypeptide is Probable Fe(2+)-trafficking protein (Yersinia enterocolitica serotype O:8 / biotype 1B (strain NCTC 13174 / 8081)).